Consider the following 315-residue polypeptide: Probable HTH-type transcriptional regulator SinR (315 aa).

Residues 8–65 form the HTH lysR-type domain; it reads RGMRDWMIFIKVAEVGNLSRAARELDISISAVSKSLSRLENSIEVTLLRRDSHHLELT. Residues 25–44 constitute a DNA-binding region (H-T-H motif); the sequence is LSRAARELDISISAVSKSLS.

It belongs to the LysR transcriptional regulatory family.

Functionally, probable regulatory protein. Its target is not known. This Salmonella typhimurium (strain LT2 / SGSC1412 / ATCC 700720) protein is Probable HTH-type transcriptional regulator SinR (sinR).